A 214-amino-acid polypeptide reads, in one-letter code: Large ribosomal subunit protein uL16 (214 aa).

This sequence belongs to the universal ribosomal protein uL16 family. As to quaternary structure, component of the large ribosomal subunit. Mature ribosomes consist of a small (40S) and a large (60S) subunit. The 40S subunit contains about 33 different proteins and 1 molecule of RNA (18S). The 60S subunit contains about 49 different proteins and 3 molecules of RNA (28S, 5.8S and 5S).

This Caenorhabditis elegans protein is Large ribosomal subunit protein uL16 (rpl-10L).